A 100-amino-acid chain; its full sequence is Urease subunit gamma (100 aa).

This sequence belongs to the urease gamma subunit family. Heterotrimer of UreA (gamma), UreB (beta) and UreC (alpha) subunits. Three heterotrimers associate to form the active enzyme.

It localises to the cytoplasm. It catalyses the reaction urea + 2 H2O + H(+) = hydrogencarbonate + 2 NH4(+). Its pathway is nitrogen metabolism; urea degradation; CO(2) and NH(3) from urea (urease route): step 1/1. This is Urease subunit gamma from Lysinibacillus sphaericus (strain C3-41).